The sequence spans 141 residues: Nucleoside diphosphate kinase (141 aa).

ATP is bound by residues lysine 11, phenylalanine 59, arginine 87, threonine 93, arginine 104, and asparagine 114. The Pros-phosphohistidine intermediate role is filled by histidine 117.

It belongs to the NDK family. In terms of assembly, homotetramer. Requires Mg(2+) as cofactor.

It is found in the cytoplasm. The catalysed reaction is a 2'-deoxyribonucleoside 5'-diphosphate + ATP = a 2'-deoxyribonucleoside 5'-triphosphate + ADP. The enzyme catalyses a ribonucleoside 5'-diphosphate + ATP = a ribonucleoside 5'-triphosphate + ADP. Functionally, major role in the synthesis of nucleoside triphosphates other than ATP. The ATP gamma phosphate is transferred to the NDP beta phosphate via a ping-pong mechanism, using a phosphorylated active-site intermediate. The polypeptide is Nucleoside diphosphate kinase (Actinobacillus succinogenes (strain ATCC 55618 / DSM 22257 / CCUG 43843 / 130Z)).